A 449-amino-acid chain; its full sequence is Phosphoglucosamine mutase (449 aa).

The Phosphoserine intermediate role is filled by serine 105. Residues serine 105, aspartate 242, aspartate 244, and aspartate 246 each coordinate Mg(2+). Serine 105 bears the Phosphoserine mark.

The protein belongs to the phosphohexose mutase family. It depends on Mg(2+) as a cofactor. In terms of processing, activated by phosphorylation.

The catalysed reaction is alpha-D-glucosamine 1-phosphate = D-glucosamine 6-phosphate. Its function is as follows. Catalyzes the conversion of glucosamine-6-phosphate to glucosamine-1-phosphate. In Clavibacter sepedonicus (Clavibacter michiganensis subsp. sepedonicus), this protein is Phosphoglucosamine mutase.